A 220-amino-acid polypeptide reads, in one-letter code: Protein GrpE (220 aa).

Composition is skewed to polar residues over residues 1-12 (MEQGDKQATYNE) and 50-63 (AAST…QTSV). The segment at 1–67 (MEQGDKQATY…AEQTSVEAEE (67 aa)) is disordered.

Belongs to the GrpE family. Homodimer.

The protein resides in the cytoplasm. Functionally, participates actively in the response to hyperosmotic and heat shock by preventing the aggregation of stress-denatured proteins, in association with DnaK and GrpE. It is the nucleotide exchange factor for DnaK and may function as a thermosensor. Unfolded proteins bind initially to DnaJ; upon interaction with the DnaJ-bound protein, DnaK hydrolyzes its bound ATP, resulting in the formation of a stable complex. GrpE releases ADP from DnaK; ATP binding to DnaK triggers the release of the substrate protein, thus completing the reaction cycle. Several rounds of ATP-dependent interactions between DnaJ, DnaK and GrpE are required for fully efficient folding. This chain is Protein GrpE, found in Geobacillus thermodenitrificans (strain NG80-2).